Consider the following 906-residue polypeptide: Catenin alpha-1 (906 aa).

Thr-2 is subject to N-acetylthreonine. The involved in homodimerization stretch occupies residues 2-228; sequence TAVHAGNINF…PILYTASQAC (227 aa). Residue Lys-57 forms a Glycyl lysine isopeptide (Lys-Gly) (interchain with G-Cter in SUMO2) linkage. An interaction with JUP and CTNNB1 region spans residues 97–148; it reads VRKQGDLMKAAAGEFADDPCSSVKRGNMVRAARALLSAVTRLLILADMADVY. 4 positions are modified to phosphoserine: Ser-264, Ser-268, Ser-295, and Ser-297. An interaction with alpha-actinin region spans residues 325–394; it reads TRDDRRERIV…AVMDHVSDSF (70 aa). Thr-634 carries the post-translational modification Phosphothreonine. Position 641 is a phosphoserine; by CK2 (Ser-641). Position 645 is a phosphothreonine (Thr-645). 2 positions are modified to phosphoserine; by CK1: Ser-652 and Ser-655. Thr-658 carries the post-translational modification Phosphothreonine; by CK1. A Glycyl lysine isopeptide (Lys-Gly) (interchain with G-Cter in SUMO2) cross-link involves residue Lys-797. Phosphoserine is present on Ser-851. Residues 864–880 show a composition bias toward basic and acidic residues; sequence PEKKPLVKREKQDETQT. The segment at 864-894 is disordered; that stretch reads PEKKPLVKREKQDETQTKIKRASQKKHVNPV. Over residues 881–891 the composition is skewed to basic residues; the sequence is KIKRASQKKHV.

Belongs to the vinculin/alpha-catenin family. As to quaternary structure, monomer and homodimer; the monomer preferentially binds to CTNNB1 and the homodimer to actin. Component of an cadherin:catenin adhesion complex composed of at least of CDH26, beta-catenin/CTNNB1, alpha-catenin/CTNNA1 and p120 catenin/CTNND1. Possible component of an E-cadherin/ catenin adhesion complex together with E-cadherin/CDH1 and beta-catenin/CTNNB1 or gamma-catenin/JUP; the complex is located to adherens junctions. The stable association of CTNNA1 is controversial as CTNNA1 was shown not to bind to F-actin when assembled in the complex. Alternatively, the CTNNA1-containing complex may be linked to F-actin by other proteins such as LIMA1. Binds AFDN and F-actin. Interacts with ARHGAP21. Interacts with AJUBA. Interacts with LIMA1. Interacts with vinculin/VCL. Interacts with TJP2/ZO2 (via N-terminus). Interacts with TJP1/ZO1 (via N-terminus). Sumoylated. In terms of processing, phosphorylation seems to contribute to the strength of cell-cell adhesion rather than to the basic capacity for cell-cell adhesion. Ubiquitously expressed in normal tissues. As to expression, abundantly expressed in brain and cerebellum, also expressed in the placenta, liver, lung, colon, heart, pancreas, stomach and thymus.

The protein localises to the cytoplasm. It is found in the cytoskeleton. It localises to the cell junction. The protein resides in the adherens junction. Its subcellular location is the cell membrane. The protein localises to the nucleus. In terms of biological role, associates with the cytoplasmic domain of a variety of cadherins. The association of catenins to cadherins produces a complex which is linked to the actin filament network, and which seems to be of primary importance for cadherins cell-adhesion properties. Can associate with both E- and N-cadherins. Originally believed to be a stable component of E-cadherin/catenin adhesion complexes and to mediate the linkage of cadherins to the actin cytoskeleton at adherens junctions. In contrast, cortical actin was found to be much more dynamic than E-cadherin/catenin complexes and CTNNA1 was shown not to bind to F-actin when assembled in the complex suggesting a different linkage between actin and adherens junctions components. The homodimeric form may regulate actin filament assembly and inhibit actin branching by competing with the Arp2/3 complex for binding to actin filaments. Involved in the regulation of WWTR1/TAZ, YAP1 and TGFB1-dependent SMAD2 and SMAD3 nuclear accumulation. May play a crucial role in cell differentiation. The polypeptide is Catenin alpha-1 (Homo sapiens (Human)).